The chain runs to 200 residues: Elongation factor Ts (200 aa).

The segment at 83–86 is involved in Mg(2+) ion dislocation from EF-Tu; the sequence is TDFA.

Belongs to the EF-Ts family.

The protein localises to the cytoplasm. In terms of biological role, associates with the EF-Tu.GDP complex and induces the exchange of GDP to GTP. It remains bound to the aminoacyl-tRNA.EF-Tu.GTP complex up to the GTP hydrolysis stage on the ribosome. The sequence is that of Elongation factor Ts from Syntrophobacter fumaroxidans (strain DSM 10017 / MPOB).